We begin with the raw amino-acid sequence, 551 residues long: Tetrachloroethene reductive dehalogenase (551 aa).

A signal peptide (tat-type signal) is located at residues 1–39; it reads MGEINRRNFLKVSILGAAAAAVASASAVKGMVSPLVADA. The 30-residue stretch at 411–440 folds into the 4Fe-4S ferredoxin-type 1 domain; it reads PRKFGVREFCRLCKKCADACPAQAISHEKD. Residues C420, C423, C426, C430, C467, C478, C481, and C485 each contribute to the [4Fe-4S] cluster site. One can recognise a 4Fe-4S ferredoxin-type 2 domain in the interval 478 to 496; that stretch reads CSNCVAVCSWNKVETWNHD.

It belongs to the PceA family. [4Fe-4S] cluster is required as a cofactor. Requires corrinoid as cofactor. Predicted to be exported by the Tat system. The position of the signal peptide cleavage has been experimentally proven.

The protein resides in the cytoplasm. Its subcellular location is the cell membrane. The protein localises to the secreted. It catalyses the reaction trichloroethene + chloride + A + H(+) = tetrachloroethene + AH2. The enzyme catalyses trichloroethene + AH2 = (Z)-1,2-dichloroethene + chloride + A + H(+). PceT is required as a chaperone for prePceA maturation. In the absence or presence of exogenous vitamin B12, the intracellular corrinoid level decreases in fumarate-grown cells and the PceA precursor forms catalytically inactive, corrinoid-free multiprotein aggregates. Exogenous vitamin B12 is not incorporated into the PceA precursor, even though it affects the transposition of the pce gene cluster. In terms of biological role, catalyzes the reductive dechlorination of tetrachloroethene (PCE) to trichloroethene (TCE) and of trichloroethene to cis-1,2-dichloroethene (DCE). Can also use various chlorinated ethanes such as tetrachloroethane, pentachloroethane and hexachloroethane. Reduced methyl viologen can act as the artificial electron donor. The sequence is that of Tetrachloroethene reductive dehalogenase from Desulfitobacterium hafniense (strain Y51).